The sequence spans 642 residues: uncharacterized protein (642 aa).

Topologically, residues Met1–Lys15 are cytoplasmic. The chain crosses the membrane as a helical span at residues Pro16–Leu36. Residues Thr37 to Arg42 lie on the Extracellular side of the membrane. Residues Ile43 to Ala63 traverse the membrane as a helical segment. Residues Asn64–Val73 are Cytoplasmic-facing. A helical transmembrane segment spans residues Gly74–Val94. Residues Arg95 to Trp104 lie on the Extracellular side of the membrane. A helical membrane pass occupies residues Tyr105–Leu125. Residues Gln126–Gly142 are Cytoplasmic-facing. Residues Val143 to Phe163 traverse the membrane as a helical segment. Over Arg164 to Ser460 the chain is Extracellular. Disordered regions lie at residues Glu183–Ser206 and Gly227–Arg324. 2 stretches are compositionally biased toward polar residues: residues Arg240 to Ile260 and Ile272 to Asp312. The helical transmembrane segment at Met461–Thr481 threads the bilayer. Over Thr482 to Ser499 the chain is Cytoplasmic. The chain crosses the membrane as a helical span at residues Phe500–Leu520. Residues Gly521 to Lys538 lie on the Extracellular side of the membrane. The chain crosses the membrane as a helical span at residues Ala539–Cys559. Over Asp560–Arg574 the chain is Cytoplasmic. Residues Met575–Phe595 traverse the membrane as a helical segment. The Extracellular segment spans residues Thr596–Ser614. The helical transmembrane segment at Phe615–Phe635 threads the bilayer. The Cytoplasmic segment spans residues Leu636 to Leu642.

It belongs to the auxin efflux carrier (TC 2.A.69) family.

It localises to the membrane. This is an uncharacterized protein from Saccharomyces cerevisiae (strain ATCC 204508 / S288c) (Baker's yeast).